We begin with the raw amino-acid sequence, 169 residues long: Peptide methionine sulfoxide reductase MsrA (169 aa).

Cysteine 11 is an active-site residue.

Belongs to the MsrA Met sulfoxide reductase family.

The catalysed reaction is L-methionyl-[protein] + [thioredoxin]-disulfide + H2O = L-methionyl-(S)-S-oxide-[protein] + [thioredoxin]-dithiol. It catalyses the reaction [thioredoxin]-disulfide + L-methionine + H2O = L-methionine (S)-S-oxide + [thioredoxin]-dithiol. In terms of biological role, has an important function as a repair enzyme for proteins that have been inactivated by oxidation. Catalyzes the reversible oxidation-reduction of methionine sulfoxide in proteins to methionine. In Leifsonia xyli subsp. xyli (strain CTCB07), this protein is Peptide methionine sulfoxide reductase MsrA.